The following is a 229-amino-acid chain: UPF0758 protein GSU0386 (229 aa).

One can recognise an MPN domain in the interval 107-229 (RFTSPEQVYN…FTSFVSAGLL (123 aa)). 3 residues coordinate Zn(2+): H178, H180, and D191. A JAMM motif motif is present at residues 178-191 (HNHPTGDPAPSRED).

This sequence belongs to the UPF0758 family.

This Geobacter sulfurreducens (strain ATCC 51573 / DSM 12127 / PCA) protein is UPF0758 protein GSU0386.